A 169-amino-acid polypeptide reads, in one-letter code: Caltractin (169 aa).

The tract at residues 1-24 (MSYRKTVVSARRDQKKGRVGGLTE) is disordered. 4 consecutive EF-hand domains span residues 25–60 (EQKQEIREAFDLFDTDGSGTIDAKELKVAMRALGFE), 61–96 (PKKEEIKKMIADIDKAGSGTIDFEEFLQMMTSKMGE), 98–133 (DSREEIIKAFKLFDDDNTGFITLKNLKRVAKELGEN), and 134–169 (LTDEELQEMTDEADRNGDGQIDEDEFYRIMKKTSLF). Ca(2+) is bound by residues D38, D40, S42, T44, and E49. Residues D147, N149, D151, Q153, and E158 each coordinate Ca(2+).

It belongs to the centrin family.

Functionally, this calcium-binding protein is found in the basal body complexes (the functional homolog of the centrosome in animal cell). In mitotic cells it is specifically associated with the poles of the mitotic spindles at the sites of the duplicated basal body complexes. The sequence is that of Caltractin from Dunaliella salina (Green alga).